A 932-amino-acid chain; its full sequence is DNA mismatch repair protein MutS (932 aa).

Residue 620 to 627 coordinates ATP; that stretch reads GPNMAGKS.

Belongs to the DNA mismatch repair MutS family.

In terms of biological role, this protein is involved in the repair of mismatches in DNA. It is possible that it carries out the mismatch recognition step. This protein has a weak ATPase activity. This is DNA mismatch repair protein MutS from Lachnoclostridium phytofermentans (strain ATCC 700394 / DSM 18823 / ISDg) (Clostridium phytofermentans).